Reading from the N-terminus, the 106-residue chain is UPF0145 protein azo0572 (106 aa).

It belongs to the UPF0145 family.

The chain is UPF0145 protein azo0572 from Azoarcus sp. (strain BH72).